The primary structure comprises 129 residues: Ig kappa chain V-IV region S107B (129 aa).

Residues 1–22 (MDLQVQIIXFLLISVTVIMSRG) form the signal peptide. The framework-1 stretch occupies residues 23 to 45 (ENVLTQSPAIMAASLGQKVTMTC). Cys45 and Cys111 are disulfide-bonded. The segment at 46–57 (SASSSVSSSYLH) is complementarity-determining-1. Residues 58-72 (WYQQKSGASPKPLIH) are framework-2. A complementarity-determining-2 region spans residues 73–79 (RTSNLAS). The interval 80–111 (GVPARFSGSGSGTSYSLTISSVEAEDDATYYC) is framework-3. Positions 112–118 (QQWSGYP) are complementarity-determining-3. Positions 119-128 (FGSGTKLEIK) are framework-4.

The polypeptide is Ig kappa chain V-IV region S107B (Mus musculus (Mouse)).